The following is a 448-amino-acid chain: Probable alpha-galactosidase B (448 aa).

Positions 1 to 23 are cleaved as a signal peptide; it reads MSRFHLPLAAAVVLVSCLWSANA. Cystine bridges form between Cys-46–Cys-78 and Cys-128–Cys-158. Asp-156 (nucleophile) is an active-site residue. 2 N-linked (GlcNAc...) asparagine glycosylation sites follow: Asn-163 and Asn-181. 226 to 230 contributes to the substrate binding site; it reads EWGQA. A glycan (N-linked (GlcNAc...) asparagine) is linked at Asn-237. Asp-248 acts as the Proton donor in catalysis.

The protein belongs to the glycosyl hydrolase 27 family.

Its subcellular location is the secreted. It catalyses the reaction Hydrolysis of terminal, non-reducing alpha-D-galactose residues in alpha-D-galactosides, including galactose oligosaccharides, galactomannans and galactolipids.. Hydrolyzes a variety of simple alpha-D-galactoside as well as more complex molecules such as oligosaccharides and polysaccharides. The sequence is that of Probable alpha-galactosidase B (aglB) from Aspergillus clavatus (strain ATCC 1007 / CBS 513.65 / DSM 816 / NCTC 3887 / NRRL 1 / QM 1276 / 107).